A 474-amino-acid polypeptide reads, in one-letter code: tRNA-2-methylthio-N(6)-dimethylallyladenosine synthase (474 aa).

An MTTase N-terminal domain is found at 3-120 (KKLHIKTWGC…LPEMIDQVQR (118 aa)). Cys-12, Cys-49, Cys-83, Cys-157, Cys-161, and Cys-164 together coordinate [4Fe-4S] cluster. In terms of domain architecture, Radical SAM core spans 143-375 (RADGPTAFVS…QDRITQQAMR (233 aa)). Positions 378–441 (RQMLGTVQRI…TNSLRGIFIR (64 aa)) constitute a TRAM domain.

This sequence belongs to the methylthiotransferase family. MiaB subfamily. In terms of assembly, monomer. Requires [4Fe-4S] cluster as cofactor.

It localises to the cytoplasm. It catalyses the reaction N(6)-dimethylallyladenosine(37) in tRNA + (sulfur carrier)-SH + AH2 + 2 S-adenosyl-L-methionine = 2-methylsulfanyl-N(6)-dimethylallyladenosine(37) in tRNA + (sulfur carrier)-H + 5'-deoxyadenosine + L-methionine + A + S-adenosyl-L-homocysteine + 2 H(+). Functionally, catalyzes the methylthiolation of N6-(dimethylallyl)adenosine (i(6)A), leading to the formation of 2-methylthio-N6-(dimethylallyl)adenosine (ms(2)i(6)A) at position 37 in tRNAs that read codons beginning with uridine. This chain is tRNA-2-methylthio-N(6)-dimethylallyladenosine synthase, found in Shewanella denitrificans (strain OS217 / ATCC BAA-1090 / DSM 15013).